The chain runs to 309 residues: Aspartate carbamoyltransferase catalytic subunit (309 aa).

Carbamoyl phosphate is bound by residues Arg55 and Thr56. Lys85 serves as a coordination point for L-aspartate. Carbamoyl phosphate-binding residues include Arg106, His135, and Gln138. L-aspartate-binding residues include Arg168 and Arg230. Carbamoyl phosphate contacts are provided by Leu268 and Pro269.

The protein belongs to the aspartate/ornithine carbamoyltransferase superfamily. ATCase family. As to quaternary structure, heterododecamer (2C3:3R2) of six catalytic PyrB chains organized as two trimers (C3), and six regulatory PyrI chains organized as three dimers (R2).

It carries out the reaction carbamoyl phosphate + L-aspartate = N-carbamoyl-L-aspartate + phosphate + H(+). Its pathway is pyrimidine metabolism; UMP biosynthesis via de novo pathway; (S)-dihydroorotate from bicarbonate: step 2/3. Its function is as follows. Catalyzes the condensation of carbamoyl phosphate and aspartate to form carbamoyl aspartate and inorganic phosphate, the committed step in the de novo pyrimidine nucleotide biosynthesis pathway. This Aliivibrio fischeri (strain ATCC 700601 / ES114) (Vibrio fischeri) protein is Aspartate carbamoyltransferase catalytic subunit.